The following is a 281-amino-acid chain: NAD kinase (281 aa).

The Proton acceptor role is filled by Asp61. NAD(+) contacts are provided by residues 61–62, 134–135, Arg145, Asp164, 175–180, and Gln234; these read DG, ND, and TAYSLS.

It belongs to the NAD kinase family. A divalent metal cation serves as cofactor.

The protein resides in the cytoplasm. The enzyme catalyses NAD(+) + ATP = ADP + NADP(+) + H(+). Its function is as follows. Involved in the regulation of the intracellular balance of NAD and NADP, and is a key enzyme in the biosynthesis of NADP. Catalyzes specifically the phosphorylation on 2'-hydroxyl of the adenosine moiety of NAD to yield NADP. The chain is NAD kinase from Clostridium botulinum (strain Kyoto / Type A2).